Reading from the N-terminus, the 315-residue chain is uncharacterized protein (315 aa).

This sequence belongs to the asfivirus C315R family.

This is an uncharacterized protein from Ornithodoros (relapsing fever ticks).